The following is a 579-amino-acid chain: Protein inscuteable homolog (579 aa).

The segment at 74–89 (SVQRWMEDLKLMTECE) is important for interaction with GPSM2. Positions 576–579 (ESFV) match the PDZ-binding motif.

Interacts with ALS2CR19/PAR3B and GPSM1/AGS3. Interacts with F2RL2/PAR3. Interacts with GPSM2/LGN (via TPR repeat region). As to expression, expressed in brain, kidney, liver, testis and skin.

Its subcellular location is the cytoplasm. It localises to the cell cortex. In terms of biological role, may function as an adapter linking the Par3 complex to the GPSM1/GPSM2 complex. Involved in spindle orientation during mitosis. May regulate cell proliferation and differentiation in the developing nervous system. May play a role in the asymmetric division of fibroblasts and participate in the process of stratification of the squamous epithelium. This Mus musculus (Mouse) protein is Protein inscuteable homolog (Insc).